The primary structure comprises 341 residues: S-adenosylmethionine:tRNA ribosyltransferase-isomerase (341 aa).

It belongs to the QueA family. Monomer.

The protein resides in the cytoplasm. It carries out the reaction 7-aminomethyl-7-carbaguanosine(34) in tRNA + S-adenosyl-L-methionine = epoxyqueuosine(34) in tRNA + adenine + L-methionine + 2 H(+). Its pathway is tRNA modification; tRNA-queuosine biosynthesis. Transfers and isomerizes the ribose moiety from AdoMet to the 7-aminomethyl group of 7-deazaguanine (preQ1-tRNA) to give epoxyqueuosine (oQ-tRNA). This Clostridium botulinum (strain Eklund 17B / Type B) protein is S-adenosylmethionine:tRNA ribosyltransferase-isomerase.